Here is a 374-residue protein sequence, read N- to C-terminus: Phosphoserine aminotransferase (374 aa).

Arg-46 contacts L-glutamate. Pyridoxal 5'-phosphate is bound by residues 80-81 (AT), Phe-104, Thr-150, Asp-174, and Gln-197. N6-(pyridoxal phosphate)lysine is present on Lys-198. Position 249–250 (249–250 (NT)) interacts with pyridoxal 5'-phosphate.

It belongs to the class-V pyridoxal-phosphate-dependent aminotransferase family. SerC subfamily. Homodimer. Pyridoxal 5'-phosphate serves as cofactor.

The protein localises to the cytoplasm. The catalysed reaction is O-phospho-L-serine + 2-oxoglutarate = 3-phosphooxypyruvate + L-glutamate. It carries out the reaction 4-(phosphooxy)-L-threonine + 2-oxoglutarate = (R)-3-hydroxy-2-oxo-4-phosphooxybutanoate + L-glutamate. It functions in the pathway amino-acid biosynthesis; L-serine biosynthesis; L-serine from 3-phospho-D-glycerate: step 2/3. The protein operates within cofactor biosynthesis; pyridoxine 5'-phosphate biosynthesis; pyridoxine 5'-phosphate from D-erythrose 4-phosphate: step 3/5. Functionally, catalyzes the reversible conversion of 3-phosphohydroxypyruvate to phosphoserine and of 3-hydroxy-2-oxo-4-phosphonooxybutanoate to phosphohydroxythreonine. This Nocardioides sp. (strain ATCC BAA-499 / JS614) protein is Phosphoserine aminotransferase.